We begin with the raw amino-acid sequence, 161 residues long: Cyclin-dependent protein kinase inhibitor SMR12 (161 aa).

Residues E84–N93 show a composition bias toward acidic residues. The tract at residues E84–I106 is disordered.

Functionally, probable cyclin-dependent protein kinase (CDK) inhibitor that functions as a repressor of mitosis in the endoreduplication cell cycle. This chain is Cyclin-dependent protein kinase inhibitor SMR12, found in Arabidopsis thaliana (Mouse-ear cress).